The primary structure comprises 209 residues: Orotate phosphoribosyltransferase (209 aa).

Residues Arg-96, Lys-100, His-102, and 122 to 130 (EDLISTGGS) each bind 5-phospho-alpha-D-ribose 1-diphosphate. Ser-126 is a binding site for orotate.

The protein belongs to the purine/pyrimidine phosphoribosyltransferase family. PyrE subfamily. In terms of assembly, homodimer. Mg(2+) is required as a cofactor.

The enzyme catalyses orotidine 5'-phosphate + diphosphate = orotate + 5-phospho-alpha-D-ribose 1-diphosphate. It participates in pyrimidine metabolism; UMP biosynthesis via de novo pathway; UMP from orotate: step 1/2. Catalyzes the transfer of a ribosyl phosphate group from 5-phosphoribose 1-diphosphate to orotate, leading to the formation of orotidine monophosphate (OMP). The polypeptide is Orotate phosphoribosyltransferase (Cytophaga hutchinsonii (strain ATCC 33406 / DSM 1761 / CIP 103989 / NBRC 15051 / NCIMB 9469 / D465)).